The chain runs to 155 residues: Ribosomal RNA large subunit methyltransferase H (155 aa).

Residues leucine 72, glycine 103, and 122-127 contribute to the S-adenosyl-L-methionine site; that span reads LSALTL.

Belongs to the RNA methyltransferase RlmH family. In terms of assembly, homodimer.

Its subcellular location is the cytoplasm. The catalysed reaction is pseudouridine(1915) in 23S rRNA + S-adenosyl-L-methionine = N(3)-methylpseudouridine(1915) in 23S rRNA + S-adenosyl-L-homocysteine + H(+). Specifically methylates the pseudouridine at position 1915 (m3Psi1915) in 23S rRNA. This is Ribosomal RNA large subunit methyltransferase H from Enterobacter sp. (strain 638).